Reading from the N-terminus, the 298-residue chain is Porphobilinogen deaminase (298 aa).

The residue at position 239 (C239) is an S-(dipyrrolylmethanemethyl)cysteine.

Belongs to the HMBS family. In terms of assembly, monomer. It depends on dipyrromethane as a cofactor.

The catalysed reaction is 4 porphobilinogen + H2O = hydroxymethylbilane + 4 NH4(+). Its pathway is porphyrin-containing compound metabolism; protoporphyrin-IX biosynthesis; coproporphyrinogen-III from 5-aminolevulinate: step 2/4. In terms of biological role, tetrapolymerization of the monopyrrole PBG into the hydroxymethylbilane pre-uroporphyrinogen in several discrete steps. The polypeptide is Porphobilinogen deaminase (Ehrlichia chaffeensis (strain ATCC CRL-10679 / Arkansas)).